Here is a 297-residue protein sequence, read N- to C-terminus: DNA excision repair protein ERCC-1 (297 aa).

An N-acetylmethionine modification is found at Met1. The segment at Met1–Leu39 is disordered. Residues Pro17–Val23 carry the Nuclear localization signal motif. Residues Lys21 and Lys37 each participate in a glycyl lysine isopeptide (Lys-Gly) (interchain with G-Cter in SUMO2) cross-link. Residues Gln134–Arg156 mediate DNA binding. Positions Ala220–Pro297 are hhH2, dimerization with ERCC4/XPF. Lys243 is covalently cross-linked (Glycyl lysine isopeptide (Lys-Gly) (interchain with G-Cter in SUMO2)).

Belongs to the ERCC1/RAD10/SWI10 family. In terms of assembly, heterodimer composed of ERCC1 isoform 1 and ERCC4/XPF. Interacts with USP45. Does not interact with ERCC4/XPF. Post-translationally, ubiquitinated with both 'Lys-48' and 'Lys-63' linkages. Deubiquitinated by USP45.

Its subcellular location is the nucleus. It is found in the cytoplasm. Functionally, non-catalytic component of a structure-specific DNA repair endonuclease responsible for the 5'-incision during DNA repair. Responsible, in conjunction with SLX4, for the first step in the repair of interstrand cross-links (ICL). Participates in the processing of anaphase bridge-generating DNA structures, which consist in incompletely processed DNA lesions arising during S or G2 phase, and can result in cytokinesis failure. Also required for homology-directed repair (HDR) of DNA double-strand breaks, in conjunction with SLX4. Not functional in the nucleotide excision repair pathway. This is DNA excision repair protein ERCC-1 (ERCC1) from Homo sapiens (Human).